Here is a 274-residue protein sequence, read N- to C-terminus: MRKIAIYGKGGIGKSTTTQNTVAGLAEMGKKVMVVGCDPKADSTRLLLGGLTQKTVLDTLREEGEDVELEDIIKEGYGASRCTESGGPEPGVGCAGRGIITSVNMLEQLGAYDDEWGLDYVFYDVLGDVVCGGFAMPIRDGKAEEIYIVVSGEMMAMYAANNICKGILKYADAGGVRLGGLICNSRKVDNEMEMIQELARQLGTQMIHFVPRDNMVQRAEINRKTVIDFDPAHQQADEYRALAKKIDDNEMFVIPKPLEIEELEKLLIDFGIAN.

8 to 15 (GKGGIGKS) provides a ligand contact to ATP. Residue cysteine 94 coordinates [4Fe-4S] cluster. Position 97 is an ADP-ribosylarginine; by dinitrogenase reductase ADP-ribosyltransferase (arginine 97). Residue cysteine 131 participates in [4Fe-4S] cluster binding.

It belongs to the NifH/BchL/ChlL family. As to quaternary structure, homodimer. Requires [4Fe-4S] cluster as cofactor. The reversible ADP-ribosylation of Arg-97 inactivates the nitrogenase reductase and regulates nitrogenase activity.

It carries out the reaction N2 + 8 reduced [2Fe-2S]-[ferredoxin] + 16 ATP + 16 H2O = H2 + 8 oxidized [2Fe-2S]-[ferredoxin] + 2 NH4(+) + 16 ADP + 16 phosphate + 6 H(+). Its function is as follows. The key enzymatic reactions in nitrogen fixation are catalyzed by the nitrogenase complex, which has 2 components: the iron protein and the molybdenum-iron protein. This Chlorobium phaeobacteroides (strain BS1) protein is Nitrogenase iron protein.